A 114-amino-acid chain; its full sequence is uncharacterized protein (114 aa).

The next 3 helical transmembrane spans lie at 38–60 (PLWF…TAGI), 64–86 (YAAI…AHMF), and 91–113 (SVIM…MGSY).

The protein localises to the cell membrane. This is an uncharacterized protein from Bacillus subtilis (strain 168).